The primary structure comprises 274 residues: Large ribosomal subunit protein uL2cz/uL2cy (274 aa).

The disordered stretch occupies residues 224–274 (NPVDHPHGGGEGRAPIGRKKPATPWGYPALGRRSRKRNKYSDNLILRRRSK).

It belongs to the universal ribosomal protein uL2 family. In terms of assembly, part of the 50S ribosomal subunit.

The protein localises to the plastid. Its subcellular location is the chloroplast. The chain is Large ribosomal subunit protein uL2cz/uL2cy (rpl2-A) from Morus indica (Mulberry).